Consider the following 313-residue polypeptide: FAM172 family protein homolog Y75B8A.31 (313 aa).

The interval 293–313 (VKSENSKESDDEAPKSKKICV) is disordered. Residues 296-307 (ENSKESDDEAPK) are compositionally biased toward basic and acidic residues.

It belongs to the FAM172 family.

This is FAM172 family protein homolog Y75B8A.31 from Caenorhabditis elegans.